The chain runs to 288 residues: Diaminopimelate epimerase (288 aa).

Asparagine 14 and asparagine 67 together coordinate substrate. Cysteine 76 (proton donor) is an active-site residue. Substrate-binding positions include 77–78 (GN), asparagine 166, asparagine 199, and 217–218 (ER). The Proton acceptor role is filled by cysteine 226. 227–228 (GT) lines the substrate pocket.

Belongs to the diaminopimelate epimerase family. As to quaternary structure, homodimer.

Its subcellular location is the cytoplasm. It catalyses the reaction (2S,6S)-2,6-diaminopimelate = meso-2,6-diaminopimelate. It participates in amino-acid biosynthesis; L-lysine biosynthesis via DAP pathway; DL-2,6-diaminopimelate from LL-2,6-diaminopimelate: step 1/1. Catalyzes the stereoinversion of LL-2,6-diaminopimelate (L,L-DAP) to meso-diaminopimelate (meso-DAP), a precursor of L-lysine and an essential component of the bacterial peptidoglycan. This Bacillus cytotoxicus (strain DSM 22905 / CIP 110041 / 391-98 / NVH 391-98) protein is Diaminopimelate epimerase.